The sequence spans 278 residues: Complement component 1 Q subcomponent-binding protein, mitochondrial (278 aa).

The N-terminal 70 residues, 1 to 70, are a transit peptide targeting the mitochondrion; it reads MLPLLRCVPR…PVPCACGCGA (70 aa). Residues 73 to 90 form a C1q binding region; it reads TEGDKAFVEFLTDEIKEE. Residues Lys-88 and Lys-91 each carry the N6-acetyllysine modification. The tract at residues 133–162 is disordered; sequence NNSIPPTFDGEEEPSQGQKAEEQEPERTST. An interaction with MAVS region spans residues 165 to 209; sequence FVVEVTKTDGKKTLVLDCHYPEDEIGHEDEAESDIFSIKEVSFQA. A Phosphotyrosine modification is found at Tyr-184. Ser-197 and Ser-201 each carry phosphoserine. Thr-210 carries the post-translational modification Phosphothreonine.

Belongs to the MAM33 family. Homotrimer; three monomers form a donut-shaped structure with an unusually asymmetric charge distribution on the surface. Interacts with CDK13, HRK, VTN, NFYB, ADRA1B, FOXC1, DDX21, DDX50, NCL, SRSF1 and SRSF9. Interacts with CD93; the association may represent a cell surface C1q receptor. Interacts with KRT1; the association represents a cell surface kininogen receptor. Interacts with CD209; the interaction is indicative for a C1q:C1QBP:CD209 signaling complex. Interacts with FBL and RRP1; the respective interactions with C1QBP are competitive. Probably associates with the mitoribosome. Interacts with MAVS; the interaction occurs upon viral transfection. Interacts with PPIF. Interacts with U2AF1L4. Interacts with PLEKHN1. Interacts with VGF-derived peptide TLQP-21. Interacts with MRE11 and RAD50; forming the MRC (MRE11-RAD50-C1QBP) complex that inhibits the activity of MRE11. Ubiquitous.

The protein resides in the mitochondrion matrix. The protein localises to the nucleus. It localises to the cell membrane. It is found in the secreted. Its subcellular location is the cytoplasm. The protein resides in the nucleolus. Is believed to be a multifunctional and multicompartmental protein involved in inflammation and infection processes, ribosome biogenesis, protein synthesis in mitochondria, regulation of apoptosis, transcriptional regulation and pre-mRNA splicing. At the cell surface is thought to act as an endothelial receptor for plasma proteins of the complement and kallikrein-kinin cascades. Putative receptor for C1q; specifically binds to the globular 'heads' of C1q thus inhibiting C1; may perform the receptor function through a complex with C1qR/CD93. In complex with cytokeratin-1/KRT1 is a high affinity receptor for kininogen-1/HMWK. Can also bind other plasma proteins, such as coagulation factor XII leading to its autoactivation. May function to bind initially fluid kininogen-1 to the cell membrane. The secreted form may enhance both extrinsic and intrinsic coagulation pathways. It is postulated that the cell surface form requires docking with transmembrane proteins for downstream signaling which might be specific for a cell-type or response. By acting as C1q receptor is involved in chemotaxis of immature dendritic cells and neutrophils and is proposed to signal through CD209/DC-SIGN on immature dendritic cells, through integrin alpha-4/beta-1 during trophoblast invasion of the decidua, and through integrin beta-1 during endothelial cell adhesion and spreading. Signaling involved in inhibition of innate immune response is implicating the PI3K-AKT/PKB pathway. Required for protein synthesis in mitochondria. In mitochondrial translation may be involved in formation of functional 55S mitoribosomes; the function seems to involve its RNA-binding activity. Acts as a RNA modification reader, which specifically recognizes and binds mitochondrial RNAs modified by C5-methylcytosine (m5C) in response to stress, and promotes recruitment of the mitochondrial degradosome complex, leading to their degradation. May be involved in the nucleolar ribosome maturation process; the function may involve the exchange of FBL for RRP1 in the association with pre-ribosome particles. Involved in regulation of RNA splicing by inhibiting the RNA-binding capacity of SRSF1 and its phosphorylation. Is required for the nuclear translocation of splicing factor U2AF1L4. Involved in regulation of CDKN2A- and HRK-mediated apoptosis. May be involved in regulation of FOXC1 transcriptional activity and NFY/CCAAT-binding factor complex-mediated transcription. May play a role in antibacterial defense. Acts as a regulator of DNA repair via homologous recombination by inhibiting the activity of MRE11: interacts with unphosphorylated MRE11 and RAD50 in absence of DNA damage, preventing formation and activity of the MRN complex. Following DNA damage, dissociates from phosphorylated MRE11, allowing formation of the MRN complex. In Mus musculus (Mouse), this protein is Complement component 1 Q subcomponent-binding protein, mitochondrial (C1qbp).